The following is a 261-amino-acid chain: Small ribosomal subunit protein eS1 (261 aa).

The segment covering 1–18 has biased composition (basic residues); sequence MAVGKNKRISKGKKGGKK. The segment at 1–21 is disordered; sequence MAVGKNKRISKGKKGGKKKAT.

The protein belongs to the eukaryotic ribosomal protein eS1 family. Component of the small ribosomal subunit. Mature ribosomes consist of a small (40S) and a large (60S) subunit. The 40S subunit contains about 33 different proteins and 1 molecule of RNA (18S). The 60S subunit contains about 49 different proteins and 3 molecules of RNA (25S, 5.8S and 5S).

Its subcellular location is the cytoplasm. The sequence is that of Small ribosomal subunit protein eS1 (cyc07) from Daucus carota (Wild carrot).